A 439-amino-acid chain; its full sequence is sn-glycerol-3-phosphate-binding periplasmic protein UgpB (439 aa).

Positions 1-25 (MFNNAIRKTSICVALTLAFSANAMA) are cleaved as a signal peptide. Residues Tyr67, Glu91, Ser146, Ser272, Gly309, Tyr348, and Arg399 each contribute to the sn-glycerol 3-phosphate site.

Belongs to the bacterial solute-binding protein 1 family. In terms of assembly, the complex is composed of two ATP-binding proteins (UgpC), two transmembrane proteins (UgpA and UgpE) and a solute-binding protein (UgpB).

It localises to the periplasm. Functionally, part of the ABC transporter complex UgpBAEC involved in sn-glycerol-3-phosphate (G3P) import. Binds G3P. This is sn-glycerol-3-phosphate-binding periplasmic protein UgpB (ugpB) from Yersinia enterocolitica serotype O:8 / biotype 1B (strain NCTC 13174 / 8081).